Here is a 479-residue protein sequence, read N- to C-terminus: Putative L-cysteine desulfhydrase 2 (479 aa).

The segment at 1–36 (MASLQSGGDAAANGVDADVDGAASPPSAKRPRAGAG) is disordered. Residues 7-36 (GGDAAANGVDADVDGAASPPSAKRPRAGAG) show a composition bias toward low complexity. Lys270 bears the N6-(pyridoxal phosphate)lysine mark.

The protein belongs to the class-V pyridoxal-phosphate-dependent aminotransferase family. Pyridoxal 5'-phosphate serves as cofactor.

It carries out the reaction L-cysteine + H2O = hydrogen sulfide + pyruvate + NH4(+) + H(+). Catalyzes the production of hydrogen sulfide (H2S) from cysteine. This is Putative L-cysteine desulfhydrase 2 from Oryza sativa subsp. japonica (Rice).